The primary structure comprises 895 residues: Zyg eleven-related protein 1 (895 aa).

Disordered stretches follow at residues 58 to 78 (HGPA…PDQG) and 195 to 221 (RGQM…SDHQ). The span at 205–220 (SPLSPSSQPSSIQSDH) shows a compositional bias: low complexity.

Interacts with elc-1. Part of an E3 ubiquitin ligase complex including zer-11, cul-2 and elc-1.

Functionally, acts as a target recruitment subunit in the E3 ubiquitin ligase complex zer-1-cul-2-elc-1. In Caenorhabditis elegans, this protein is Zyg eleven-related protein 1 (zer-1).